A 569-amino-acid chain; its full sequence is RNA demethylase ALKBH10B (569 aa).

Residues 118 to 151 (QKVAAKKAEDLKQKKTEEEAEEDLKEVVATEEEE) are a coiled coil. Positions 164 to 190 (ENDVNGDVEDVEDDSPTSDITDSGSHQ) are disordered. The span at 167-179 (VNGDVEDVEDDSP) shows a compositional bias: acidic residues. Positions 180–189 (TSDITDSGSH) are enriched in polar residues. Residues His366, Glu368, and His421 each coordinate Fe cation. 2-oxoglutarate is bound at residue Arg430. Residues 531–545 (KHVKHLPPRAQKKRL) show a composition bias toward basic residues. Residues 531-569 (KHVKHLPPRAQKKRLLPLPPAASSSPAGGSTSEPVITVG) are disordered. The segment covering 551–560 (AASSSPAGGS) has biased composition (low complexity).

It belongs to the alkB family. It depends on Fe(2+) as a cofactor.

It carries out the reaction an N(6)-methyladenosine in mRNA + 2-oxoglutarate + O2 = an adenosine in mRNA + formaldehyde + succinate + CO2. In terms of biological role, dioxygenase that demethylates RNA by oxidative demethylation: specifically demethylates N(6)-methyladenosine (m6A) RNA, the most prevalent internal modification of messenger RNA (mRNA) in higher eukaryotes. ALKBH10B-mediated mRNA m6A demethylation stabilizes the mRNA of the key flowering time regulators FT, SPL3 and SPL9, which are involved in the control of floral transition. This is RNA demethylase ALKBH10B from Arabidopsis thaliana (Mouse-ear cress).